A 254-amino-acid polypeptide reads, in one-letter code: Alcohol dehydrogenase (254 aa).

Residue 10-33 (FVAGLGGIGLDTSREIVKSGPKNL) participates in NAD(+) binding. Ser-138 serves as a coordination point for substrate. Residue Tyr-151 is the Proton acceptor of the active site.

It belongs to the short-chain dehydrogenases/reductases (SDR) family. In terms of assembly, homodimer.

It carries out the reaction a primary alcohol + NAD(+) = an aldehyde + NADH + H(+). The catalysed reaction is a secondary alcohol + NAD(+) = a ketone + NADH + H(+). The sequence is that of Alcohol dehydrogenase (Adh) from Drosophila planitibia (Fruit fly).